A 381-amino-acid chain; its full sequence is Chaperone protein DnaJ (381 aa).

One can recognise a J domain in the interval 5 to 70 (DFYEVLGVSR…QKKAAYDQYG (66 aa)). The CR-type zinc-finger motif lies at 136 to 214 (GVSKEIEVPT…CHGQGRKQKT (79 aa)). The Zn(2+) site is built by C149, C152, C166, C169, C188, C191, C202, and C205. CXXCXGXG motif repeat units follow at residues 149–156 (CDICDGSG), 166–173 (CGTCHGHG), 188–195 (CPTCNGKG), and 202–209 (CNSCHGQG).

The protein belongs to the DnaJ family. In terms of assembly, homodimer. It depends on Zn(2+) as a cofactor.

The protein localises to the cytoplasm. Participates actively in the response to hyperosmotic and heat shock by preventing the aggregation of stress-denatured proteins and by disaggregating proteins, also in an autonomous, DnaK-independent fashion. Unfolded proteins bind initially to DnaJ; upon interaction with the DnaJ-bound protein, DnaK hydrolyzes its bound ATP, resulting in the formation of a stable complex. GrpE releases ADP from DnaK; ATP binding to DnaK triggers the release of the substrate protein, thus completing the reaction cycle. Several rounds of ATP-dependent interactions between DnaJ, DnaK and GrpE are required for fully efficient folding. Also involved, together with DnaK and GrpE, in the DNA replication of plasmids through activation of initiation proteins. The polypeptide is Chaperone protein DnaJ (Vibrio atlanticus (strain LGP32) (Vibrio splendidus (strain Mel32))).